The sequence spans 90 residues: Small ribosomal subunit protein bS20 (90 aa).

The protein belongs to the bacterial ribosomal protein bS20 family.

In terms of biological role, binds directly to 16S ribosomal RNA. This Rickettsia akari (strain Hartford) protein is Small ribosomal subunit protein bS20.